The sequence spans 755 residues: LIM domain and actin-binding protein 1 (755 aa).

Position 1 is an N-acetylmethionine (M1). S15 is modified (phosphoserine). Residues 43–56 (KAAEEANMERKKNN) show a composition bias toward basic and acidic residues. The tract at residues 43–151 (KAAEEANMER…YPRSEDSHDF (109 aa)) is disordered. Over residues 88–97 (DSLPNSSSDG) the composition is skewed to polar residues. S132 is modified (phosphoserine). The Required for interaction with NPC1L1 motif lies at 164 to 166 (CLG). Composition is skewed to basic and acidic residues over residues 168-177 (SRHEAEKPEM) and 199-208 (MMFEKGEHSQ). Positions 168 to 226 (SRHEAEKPEMSENTETSGKIEKYNVPLNRLKMMFEKGEHSQNKSPWTQGRNAGGRRLSE) are disordered. Residues S225, S230, and S242 each carry the phosphoserine modification. Residues 241–379 (LSSSAFNSEK…ESSPSKTAKK (139 aa)) are disordered. Residues 249–258 (EKNESKRNLE) show a composition bias toward basic and acidic residues. Residue S263 is modified to Phosphoserine. Over residues 292–305 (KPSESKTHKWEQKE) the composition is skewed to basic and acidic residues. Residues 342–354 (CNSQGRSEAQQPI) are compositionally biased toward polar residues. Residues S348, S360, S367, and S372 each carry the phosphoserine modification. Residues 363-375 (ARTSSLPESSPSK) show a composition bias toward polar residues. The LIM zinc-binding domain maps to 386-446 (ESCVECQKTV…KPHFNQLFKS (61 aa)). N6-succinyllysine is present on K437. Disordered stretches follow at residues 468-493 (ENEE…GVED) and 505-714 (SMEA…DTTT). S488 carries the phosphoserine modification. Residues 491–511 (VEDAPIAKVGVLAASMEAKAS) form a required for interaction with MYO5B region. 2 stretches are compositionally biased toward basic and acidic residues: residues 512–526 (SQRE…ETKK) and 555–566 (WPPEDEVCKTEA). A compositionally biased stretch (low complexity) spans 599-611 (SSVKSPKPLSPSL). Residues S600, S603, S608, and S616 each carry the phosphoserine modification. Composition is skewed to basic and acidic residues over residues 638–653 (RPSR…RWQS) and 662–673 (EAPRGRDGRSFE). Residues S697, S722, and S737 each carry the phosphoserine modification.

In terms of assembly, interacts with NPC1L1; bridges NPC1L1 with MYO5B. Interacts with MYO5B; bridges MYO5B with NPC1L1. Interacts with PXN; this complex stabilizes actin dynamics. Interacts with F-actin and G-actin. Interacts with LUZP1 (via C-terminus); both proteins restrict ciliation and may work together to regulate this process. Binds RAB40B (GTP-bound); interaction influences LIMA1 subcellular localization in lamellipodia during cell migration. In terms of processing, phosphorylation of the C-terminal region by MAPK1/MAPK3 reduces its association with F-actin and contributes to actin filament reorganization and enhanced cell motility. Ubiquitinated by the ECS(RAB40B) complex leading to its degradation. Expressed throughout the kidney, including renal cortex, medulla, and glomeruli. Expressed in glomeruli, tubular epithelial cells, and extraglomerular vascular endothelial cells (at protein level).

It is found in the cytoplasm. The protein localises to the cell junction. The protein resides in the focal adhesion. Its subcellular location is the cytoskeleton. It localises to the stress fiber. It is found in the cell membrane. The protein localises to the cell projection. The protein resides in the ruffle. Its subcellular location is the lamellipodium. Its function is as follows. Actin-binding protein involved in actin cytoskeleton regulation and dynamics. Increases the number and size of actin stress fibers and inhibits membrane ruffling. Inhibits actin filament depolymerization. Bundles actin filaments, delays filament nucleation and reduces formation of branched filaments. Acts as a negative regulator of primary cilium formation. Plays a role in cholesterol homeostasis. Influences plasma cholesterol levels through regulation of intestinal cholesterol absorption. May act as a scaffold protein by regulating NPC1L1 transportation, an essential protein for cholesterol absorption, to the plasma membrane by recruiting MYO5B to NPC1L1, and thus facilitates cholesterol uptake. This chain is LIM domain and actin-binding protein 1, found in Rattus norvegicus (Rat).